A 194-amino-acid chain; its full sequence is dTTP/UTP pyrophosphatase (194 aa).

The Proton acceptor role is filled by D73.

It belongs to the Maf family. YhdE subfamily. It depends on a divalent metal cation as a cofactor.

It is found in the cytoplasm. It carries out the reaction dTTP + H2O = dTMP + diphosphate + H(+). The enzyme catalyses UTP + H2O = UMP + diphosphate + H(+). Nucleoside triphosphate pyrophosphatase that hydrolyzes dTTP and UTP. May have a dual role in cell division arrest and in preventing the incorporation of modified nucleotides into cellular nucleic acids. This chain is dTTP/UTP pyrophosphatase, found in Clostridium botulinum (strain Okra / Type B1).